The primary structure comprises 248 residues: Probable transcriptional regulatory protein Ecaj_0351 (248 aa).

Residues 1–21 (MAGHSQFANIKHRKGAQDAKR) form a disordered region.

This sequence belongs to the TACO1 family.

It is found in the cytoplasm. The sequence is that of Probable transcriptional regulatory protein Ecaj_0351 from Ehrlichia canis (strain Jake).